The following is a 337-amino-acid chain: Heat-inducible transcription repressor HrcA (337 aa).

Belongs to the HrcA family.

Negative regulator of class I heat shock genes (grpE-dnaK-dnaJ and groELS operons). Prevents heat-shock induction of these operons. The protein is Heat-inducible transcription repressor HrcA of Kocuria rhizophila (strain ATCC 9341 / DSM 348 / NBRC 103217 / DC2201).